Here is a 153-residue protein sequence, read N- to C-terminus: MADTLMSDTPFWQRKTLDEMTDAEWESLCDGCGQCCLHKLMDEDTDEIYFTNVACRQLNIKTCQCRHYERRFEFEPDCIKLTRENLPDFEWLPMTCAYRLLAEGKPLPTWHPLQTGSKAAMHGERISVRHIAVKESEVRDWQDHILNKPSWAE.

The protein belongs to the UPF0260 family.

The protein is UPF0260 protein YcgN of Salmonella typhi.